The chain runs to 615 residues: Dihydroxy-acid dehydratase (615 aa).

Asp81 provides a ligand contact to Mg(2+). Residue Cys122 participates in [2Fe-2S] cluster binding. Asp123 and Lys124 together coordinate Mg(2+). Lys124 carries the N6-carboxylysine modification. Residue Cys193 participates in [2Fe-2S] cluster binding. Mg(2+) is bound at residue Glu489. Ser515 functions as the Proton acceptor in the catalytic mechanism.

The protein belongs to the IlvD/Edd family. As to quaternary structure, homodimer. [2Fe-2S] cluster is required as a cofactor. Mg(2+) serves as cofactor.

It carries out the reaction (2R)-2,3-dihydroxy-3-methylbutanoate = 3-methyl-2-oxobutanoate + H2O. The enzyme catalyses (2R,3R)-2,3-dihydroxy-3-methylpentanoate = (S)-3-methyl-2-oxopentanoate + H2O. It participates in amino-acid biosynthesis; L-isoleucine biosynthesis; L-isoleucine from 2-oxobutanoate: step 3/4. It functions in the pathway amino-acid biosynthesis; L-valine biosynthesis; L-valine from pyruvate: step 3/4. Functions in the biosynthesis of branched-chain amino acids. Catalyzes the dehydration of (2R,3R)-2,3-dihydroxy-3-methylpentanoate (2,3-dihydroxy-3-methylvalerate) into 2-oxo-3-methylpentanoate (2-oxo-3-methylvalerate) and of (2R)-2,3-dihydroxy-3-methylbutanoate (2,3-dihydroxyisovalerate) into 2-oxo-3-methylbutanoate (2-oxoisovalerate), the penultimate precursor to L-isoleucine and L-valine, respectively. In Pseudomonas syringae pv. syringae (strain B728a), this protein is Dihydroxy-acid dehydratase.